A 501-amino-acid polypeptide reads, in one-letter code: Inactive cytidine monophosphate-N-acetylneuraminic acid hydroxylase (501 aa).

Belongs to the CMP-Neu5Ac hydroxylase family. As to expression, widely expressed. Highly expressed in thymus. Not expressed in brain. May be expressed in adult stem cells (at protein level).

It is found in the cytoplasm. In terms of biological role, sialic acids are components of carbohydrate chains of glycoconjugates and are involved in cell-cell recognition and cell-pathogen interactions. That protein has no CMP-N-acetylneuraminate monooxygenase activity and is not able to convert CMP-N-acetylneuraminic acid (CMP-Neu5Ac) into its hydroxylated derivative CMP-N-glycolylneuraminic acid (CMP-Neu5Gc), a sialic acid abundantly expressed at the surface of many cells in vertebrates. However, it may play a role in Wnt signaling. This is Inactive cytidine monophosphate-N-acetylneuraminic acid hydroxylase (CMAHP) from Homo sapiens (Human).